Here is a 195-residue protein sequence, read N- to C-terminus: HTH-type transcriptional regulator BetI (195 aa).

An HTH tetR-type domain is found at 8 to 68 (PIRRQQLIEA…ATMRYLISHL (61 aa)). A DNA-binding region (H-T-H motif) is located at residues 31–50 (SIVQIARRAGVSNGIISHYF).

Its pathway is amine and polyamine biosynthesis; betaine biosynthesis via choline pathway [regulation]. In terms of biological role, repressor involved in the biosynthesis of the osmoprotectant glycine betaine. It represses transcription of the choline transporter BetT and the genes of BetAB involved in the synthesis of glycine betaine. The polypeptide is HTH-type transcriptional regulator BetI (Pectobacterium carotovorum subsp. carotovorum (strain PC1)).